The chain runs to 436 residues: UDP-N-acetylmuramate--L-alanine ligase (436 aa).

An ATP-binding site is contributed by 108–114; sequence GAHGKTS.

The protein belongs to the MurCDEF family.

The protein resides in the cytoplasm. The catalysed reaction is UDP-N-acetyl-alpha-D-muramate + L-alanine + ATP = UDP-N-acetyl-alpha-D-muramoyl-L-alanine + ADP + phosphate + H(+). The protein operates within cell wall biogenesis; peptidoglycan biosynthesis. Its function is as follows. Cell wall formation. This chain is UDP-N-acetylmuramate--L-alanine ligase, found in Bacillus cereus (strain Q1).